The primary structure comprises 63 residues: H/ACA ribonucleoprotein complex subunit 3-like protein (63 aa).

The interval 18 to 40 (KMDPEGKPTLSAHPARFSPDDKY) is disordered.

The protein belongs to the NOP10 family. Component of the small nucleolar ribonucleoprotein particles containing H/ACA-type snoRNAs (H/ACA snoRNPs).

It localises to the nucleus. The protein localises to the nucleolus. In terms of biological role, required for ribosome biogenesis. Part of a complex which catalyzes pseudouridylation of rRNA. This involves the isomerization of uridine such that the ribose is subsequently attached to C5, instead of the normal N1. Pseudouridine ('psi') residues may serve to stabilize the conformation of rRNAs. This chain is H/ACA ribonucleoprotein complex subunit 3-like protein, found in Trypanosoma cruzi.